The sequence spans 487 residues: MRILQACAEIFPLLKTGGLADVAGALPPALRALGAEVRVVVPGFPAILAGLVDAIEVARLEPPPAMVMARGARLLYGRLPACDVDAYVINSPDHYHRDGGPYNDARQHPYDDNHLRFGLLGWVAAKLADGLDPYWAPRVVHAHDWHAALAPAYLRALEWARGRRLAGSVYTVHNLAYQGFFPAHHFGDLGLPAAYNQVHGLEFYGQISFMKGGLYFADRITTVSPTYAREIQGAEQGCGLDGLLRDRDADLSGILNGVDDAVWNPAGDALIPATYTRRKLTGKAQCKATLQAELGLAEDPAVPLLCVVSRLTEQKGLHLVLQALPALIERGFQFALLGSGDAGMENEFRRLAEQHPTAAAVRLGYDEAFAHRLIAGSDLILVPSRFEPCGLTQLYGLKYGTLPVVRRVGGLVDTVADARLETLDHDATGFVFDDFSADGLIGACLRAKALFRRRADWLQVQRRGMQQPFGWEDSARQYLKLYQQVAA.

Position 15 (Lys15) interacts with ADP-alpha-D-glucose.

The protein belongs to the glycosyltransferase 1 family. Bacterial/plant glycogen synthase subfamily.

It carries out the reaction [(1-&gt;4)-alpha-D-glucosyl](n) + ADP-alpha-D-glucose = [(1-&gt;4)-alpha-D-glucosyl](n+1) + ADP + H(+). Its pathway is glycan biosynthesis; glycogen biosynthesis. In terms of biological role, synthesizes alpha-1,4-glucan chains using ADP-glucose. The sequence is that of Glycogen synthase from Leptothrix cholodnii (strain ATCC 51168 / LMG 8142 / SP-6) (Leptothrix discophora (strain SP-6)).